A 421-amino-acid chain; its full sequence is Subtilisin-like protease 2 (421 aa).

Residues 1–16 (MQLLNFGLLLLPFVAG) form the signal peptide. Residues 17–122 (DLAPQPEPLL…VHPDQHVYLA (106 aa)) constitute a propeptide that is removed on maturation. The 87-residue stretch at 36-122 (QYIVTLKEGL…VHPDQHVYLA (87 aa)) folds into the Inhibitor I9 domain. One can recognise a Peptidase S8 domain in the interval 131-421 (RWGLGYMSSK…ERKFTLPKYY (291 aa)). Catalysis depends on charge relay system residues Asp-169 and His-201. Asn-248, Asn-261, and Asn-348 each carry an N-linked (GlcNAc...) asparagine glycan. Catalysis depends on Ser-357, which acts as the Charge relay system. N-linked (GlcNAc...) asparagine glycosylation occurs at Asn-388.

Belongs to the peptidase S8 family.

Its subcellular location is the secreted. Functionally, secreted subtilisin-like serine protease with keratinolytic activity that contributes to pathogenicity. The protein is Subtilisin-like protease 2 (SUB2) of Arthroderma benhamiae (strain ATCC MYA-4681 / CBS 112371) (Trichophyton mentagrophytes).